A 95-amino-acid polypeptide reads, in one-letter code: YcgL domain-containing protein APJL_0712 (95 aa).

In terms of domain architecture, YcgL spans 4–88 (HLCAIYKSPK…PPENLLKTFL (85 aa)).

This Actinobacillus pleuropneumoniae serotype 3 (strain JL03) protein is YcgL domain-containing protein APJL_0712.